The sequence spans 547 residues: uncharacterized protein (547 aa).

The Extracellular portion of the chain corresponds to 1–21; the sequence is MVKKHQNSKMGNTNHFGHLKS. The helical transmembrane segment at 22-42 threads the bilayer; that stretch reads FVGGNVVALGAGTPYLFSFYA. The Cytoplasmic segment spans residues 43–58; sequence PQLLSKCHIPVSASSK. The chain crosses the membrane as a helical span at residues 59-79; sequence LSFSLTIGSSLMGILAGIVVD. Topologically, residues 80-83 are extracellular; sequence RSPK. The chain crosses the membrane as a helical span at residues 84–104; sequence LSCLIGSMCVFIAYLILNLCY. The Cytoplasmic segment spans residues 105–110; the sequence is KHEWSS. A helical membrane pass occupies residues 111–131; the sequence is TFLISLSLVLIGYGSVSGFYA. The Extracellular segment spans residues 132 to 144; the sequence is SVKCANTNFPQHR. A helical transmembrane segment spans residues 145-165; sequence GTAGAFPVSLYGLSGMVFSYL. Residues 166 to 175 are Cytoplasmic-facing; it reads CSKLFGENIE. A helical membrane pass occupies residues 176–196; it reads HVFIFLMVACGCMILVGYFSL. Residues 197 to 323 lie on the Extracellular side of the membrane; it reads DIFSNAEGDD…LKSSTFIGYY (127 aa). Position 237 is a phosphoserine (Ser-237). Residues 275-300 are disordered; the sequence is LLSPSSPHTKYDFEDENTSKNTVGEN. Residues 324-344 form a helical membrane-spanning segment; the sequence is IVLGILQGVGLMYIYSVGFMV. Topologically, residues 345–398 are cytoplasmic; it reads QAQVSTPPLNQLPINAEKIQSLQVTLLSLLSFCGRLSSGPISDFLVKKFKAQRL. Residues 399 to 419 form a helical membrane-spanning segment; the sequence is WNIVIASLLVFLASNKISHDF. Residues 420-437 lie on the Extracellular side of the membrane; the sequence is SSIEDPSLRASKSFKNIS. A helical transmembrane segment spans residues 438–458; the sequence is VCSAIFGYSFGVLFGTFPSIV. The Cytoplasmic portion of the chain corresponds to 459–469; that stretch reads ADRFGTNGYST. A helical transmembrane segment spans residues 470-490; that stretch reads LWGVLTTGGVFSVSVFTDILG. Topologically, residues 491–514 are extracellular; sequence RDFKANTGDDDGNCKKGVLCYSYT. The helical transmembrane segment at 515 to 535 threads the bilayer; it reads FMVTKYCAAFNLLFVLGIIGY. The Cytoplasmic portion of the chain corresponds to 536-547; that stretch reads TYYRRRATANSL.

The protein resides in the membrane. This is an uncharacterized protein from Saccharomyces cerevisiae (strain ATCC 204508 / S288c) (Baker's yeast).